The sequence spans 378 residues: UPF0754 membrane protein BC_0879 (378 aa).

A helical membrane pass occupies residues 357–377 (YLGALLGGMIGLVQGLLLLFL).

The protein belongs to the UPF0754 family.

The protein localises to the cell membrane. This Bacillus cereus (strain ATCC 14579 / DSM 31 / CCUG 7414 / JCM 2152 / NBRC 15305 / NCIMB 9373 / NCTC 2599 / NRRL B-3711) protein is UPF0754 membrane protein BC_0879.